The following is a 198-amino-acid chain: Recombination protein RecR (198 aa).

The segment at 57 to 72 adopts a C4-type zinc-finger fold; the sequence is CSVCGHITENDPCYIC. One can recognise a Toprim domain in the interval 80–175; the sequence is SVICVVEDDK…KVTRLAQGLS (96 aa).

Belongs to the RecR family.

Its function is as follows. May play a role in DNA repair. It seems to be involved in an RecBC-independent recombinational process of DNA repair. It may act with RecF and RecO. The sequence is that of Recombination protein RecR from Staphylococcus aureus (strain Mu3 / ATCC 700698).